The chain runs to 776 residues: Cilium assembly protein DZIP1L (776 aa).

The segment at 166 to 189 (HTCHLCDKTFMNATFLRGHIQRRH) adopts a C2H2-type zinc-finger fold. A coiled-coil region spans residues 196–450 (GKQKQEQQLG…RKVLAALRNN (255 aa)). A phosphoserine mark is found at Ser425 and Ser426. The tract at residues 520-776 (SRAKKRWEGT…SGSRPRIPGW (257 aa)) is disordered. The span at 600 to 618 (GPSSTPVSPGPGLSTPPFS) shows a compositional bias: low complexity. Residues 652 to 683 (WSDSETSEESAQSPGKGSDGLASSATLVQSMV) show a composition bias toward polar residues. The segment covering 685–694 (NLEKQLETPA) has biased composition (basic and acidic residues). The segment covering 709–721 (TALQRSSTPARKT) has biased composition (polar residues).

Belongs to the DZIP C2H2-type zinc-finger protein family. In terms of assembly, interacts with SEPTIN2.

It is found in the cytoplasm. The protein resides in the cytoskeleton. It localises to the cilium basal body. Its subcellular location is the microtubule organizing center. The protein localises to the centrosome. It is found in the centriole. Functionally, involved in primary cilium formation. Probably acts as a transition zone protein required for localization of PKD1/PC1 and PKD2/PC2 to the ciliary membrane. This is Cilium assembly protein DZIP1L from Rattus norvegicus (Rat).